The chain runs to 792 residues: Chloride channel protein CLC-d (792 aa).

The next 12 membrane-spanning stretches (helical) occupy residues 78-98, 119-139, 170-190, 195-215, 237-257, 267-287, 320-340, 361-381, 451-471, 474-494, 508-528, and 529-549; these read FFSL…NLSV, AGFI…AYII, RTLI…LALG, LVHT…TKYH, GCAA…LFAL, QLMW…RTAM, LLPM…FNQL, IIEA…LPLL, LLTF…TAVP, QFVP…MFVV, ALLG…SLCV, and IMVE…VLLI. CBS domains are found at residues 592 to 652 and 704 to 761; these read QSQK…KVDF and LNPS…SSAV. Residues 731-751 form a helical membrane-spanning segment; that stretch reads HLFVVPRPSRVIGLITRKDLL.

It belongs to the chloride channel (TC 2.A.49) family. In terms of assembly, homodimer. As to expression, broadly expressed in the plant, but predominantly in the silique.

The protein localises to the membrane. Its function is as follows. Voltage-gated chloride channel. The sequence is that of Chloride channel protein CLC-d (CLC-D) from Arabidopsis thaliana (Mouse-ear cress).